A 163-amino-acid chain; its full sequence is Nucleotide-binding protein NT01EI_1072 (163 aa).

The protein belongs to the YajQ family.

Functionally, nucleotide-binding protein. The sequence is that of Nucleotide-binding protein NT01EI_1072 from Edwardsiella ictaluri (strain 93-146).